A 151-amino-acid polypeptide reads, in one-letter code: D-aminoacyl-tRNA deacylase (151 aa).

The short motif at 142-143 (GP) is the Gly-cisPro motif, important for rejection of L-amino acids element.

The protein belongs to the DTD family. Homodimer.

It localises to the cytoplasm. The catalysed reaction is glycyl-tRNA(Ala) + H2O = tRNA(Ala) + glycine + H(+). It carries out the reaction a D-aminoacyl-tRNA + H2O = a tRNA + a D-alpha-amino acid + H(+). In terms of biological role, an aminoacyl-tRNA editing enzyme that deacylates mischarged D-aminoacyl-tRNAs. Also deacylates mischarged glycyl-tRNA(Ala), protecting cells against glycine mischarging by AlaRS. Acts via tRNA-based rather than protein-based catalysis; rejects L-amino acids rather than detecting D-amino acids in the active site. By recycling D-aminoacyl-tRNA to D-amino acids and free tRNA molecules, this enzyme counteracts the toxicity associated with the formation of D-aminoacyl-tRNA entities in vivo and helps enforce protein L-homochirality. The chain is D-aminoacyl-tRNA deacylase from Psychrobacter cryohalolentis (strain ATCC BAA-1226 / DSM 17306 / VKM B-2378 / K5).